The primary structure comprises 452 residues: MLDLSSNRLPNRASLITNRAFSAIERFLHIEAMSGVVLLLAAATALILANSQYTSLYEAFWHTPLGFNFGHFNLSWDLHFWVNDVLMTIFFLVAGMEIRREIHEGALASVKQAILPIVAAIGGVCIPAIIYLSFNFNGGHIYGWAVPTATDIAFALGILALLGKAIPSNLHIILLSLAIIDDIMAVLIIAFFYSTNLDPSGLAIAAAGIALVFFFQWISFASAWLYVLPGAIIWWGLMVTGIHPSLAGVILGMMTPVFPTRNLVSPLTTLSNAIQTLQEKNTNTDLHHISTTLKKMRKGQRDIVAPVIRIQKELHPWVAYGVMPIFAFANAGVSFANFDLASQKSFLIVLGIIIGLCIGKPLGILAASYLAVKSGLCRLPPHVTWTGILLIGFLAGIGFTMSIFVSMLAFQDIAQLNSAKIGVLCGSGLSALAGLGYGLIYIKNNKKTHNKP.

11 consecutive transmembrane segments (helical) span residues 27–47 (FLHI…TALI), 78–98 (LHFW…GMEI), 114–134 (ILPI…YLSF), 141–161 (IYGW…ILAL), 172–192 (IILL…IAFF), 201–221 (GLAI…ISFA), 222–242 (SAWL…VTGI), 316–336 (PWVA…VSFA), 346–366 (FLIV…GILA), 388–408 (ILLI…VSML), and 421–441 (IGVL…GLIY).

The protein belongs to the NhaA Na(+)/H(+) (TC 2.A.33) antiporter family.

The protein resides in the cell inner membrane. The catalysed reaction is Na(+)(in) + 2 H(+)(out) = Na(+)(out) + 2 H(+)(in). Its function is as follows. Na(+)/H(+) antiporter that extrudes sodium in exchange for external protons. This chain is Na(+)/H(+) antiporter NhaA, found in Bartonella bacilliformis (strain ATCC 35685 / KC583 / Herrer 020/F12,63).